A 730-amino-acid chain; its full sequence is Elongation factor 2 (730 aa).

The 242-residue stretch at 19–260 (QRIRNIGIVA…MVIHFLPNPL (242 aa)) folds into the tr-type G domain. GTP is bound by residues 28–35 (AHIDHGKT), 94–98 (DTPGH), and 148–151 (NKVD). At histidine 596 the chain carries Diphthamide.

This sequence belongs to the TRAFAC class translation factor GTPase superfamily. Classic translation factor GTPase family. EF-G/EF-2 subfamily.

It is found in the cytoplasm. Its function is as follows. Catalyzes the GTP-dependent ribosomal translocation step during translation elongation. During this step, the ribosome changes from the pre-translocational (PRE) to the post-translocational (POST) state as the newly formed A-site-bound peptidyl-tRNA and P-site-bound deacylated tRNA move to the P and E sites, respectively. Catalyzes the coordinated movement of the two tRNA molecules, the mRNA and conformational changes in the ribosome. In Methanosarcina mazei (strain ATCC BAA-159 / DSM 3647 / Goe1 / Go1 / JCM 11833 / OCM 88) (Methanosarcina frisia), this protein is Elongation factor 2.